A 279-amino-acid chain; its full sequence is MDTELLKTFLEVSRTRHFGRAAESLYLTQSAVSFRIRQLENQLGVNLFTRHRNNIRLTAAGEKLLPYAETLMSTWQAARKEVAHTSRHNEFSIGASASLWECMLNQWLGRLYQNQDTHTGLQFEARIAQRQSLVKQLHERQLDLLITTEAPKMDEFSSQLLGYFTLALYTSAPSKLKGDLNYLRLEWGPDFQQHEAGLIGTDEVPILTTSSAELAQQQIAMLNGCTWLPVSWARKKGGLHTVVDSTTLSRPLYAIWLQNSDKHALIRDLLKINVLDEVY.

In terms of domain architecture, HTH lysR-type spans 1–58 (MDTELLKTFLEVSRTRHFGRAAESLYLTQSAVSFRIRQLENQLGVNLFTRHRNNIRLT). A DNA-binding region (H-T-H motif) is located at residues 18 to 37 (FGRAAESLYLTQSAVSFRIR).

The protein belongs to the LysR transcriptional regulatory family.

Its function is as follows. Negatively regulates the transcription of the flagellar master operon flhDC by binding to the upstream region of the operon. In Escherichia fergusonii (strain ATCC 35469 / DSM 13698 / CCUG 18766 / IAM 14443 / JCM 21226 / LMG 7866 / NBRC 102419 / NCTC 12128 / CDC 0568-73), this protein is HTH-type transcriptional regulator HdfR.